We begin with the raw amino-acid sequence, 305 residues long: Dihydroorotate dehydrogenase B (NAD(+)), catalytic subunit (305 aa).

FMN-binding positions include Ser-21 and Lys-45–Ala-46. Residues Lys-45 and Asn-69–Leu-73 contribute to the substrate site. 2 residues coordinate FMN: Asn-99 and Asn-127. Asn-127 lines the substrate pocket. Cys-130 acts as the Nucleophile in catalysis. FMN contacts are provided by Lys-165 and Ile-190. Asn-191–Thr-192 contacts substrate. FMN contacts are provided by residues Gly-216, Gly-242 to Gly-243, and Gly-264 to Thr-265.

Belongs to the dihydroorotate dehydrogenase family. Type 1 subfamily. As to quaternary structure, heterotetramer of 2 PyrK and 2 PyrD type B subunits. It depends on FMN as a cofactor.

The protein resides in the cytoplasm. It catalyses the reaction (S)-dihydroorotate + NAD(+) = orotate + NADH + H(+). It participates in pyrimidine metabolism; UMP biosynthesis via de novo pathway; orotate from (S)-dihydroorotate (NAD(+) route): step 1/1. Functionally, catalyzes the conversion of dihydroorotate to orotate with NAD(+) as electron acceptor. The polypeptide is Dihydroorotate dehydrogenase B (NAD(+)), catalytic subunit (pyrD) (Staphylococcus carnosus (strain TM300)).